We begin with the raw amino-acid sequence, 467 residues long: Ribosomal protein uS12 methylthiotransferase RimO (467 aa).

One can recognise an MTTase N-terminal domain in the interval 1-110; sequence MDLHGCAKNQ…LPQLIDSMFP (110 aa). The [4Fe-4S] cluster site is built by C6, C42, C73, C153, C157, and C160. Residues 139–386 enclose the Radical SAM core domain; that stretch reads LNFPRSTYIK…QNAQTSITEK (248 aa). Positions 389 to 467 constitute a TRAM domain; it reads DSFIGKEIEV…NGFDLEAVAV (79 aa).

This sequence belongs to the methylthiotransferase family. RimO subfamily. The cofactor is [4Fe-4S] cluster.

Its subcellular location is the cytoplasm. The catalysed reaction is L-aspartate(89)-[ribosomal protein uS12]-hydrogen + (sulfur carrier)-SH + AH2 + 2 S-adenosyl-L-methionine = 3-methylsulfanyl-L-aspartate(89)-[ribosomal protein uS12]-hydrogen + (sulfur carrier)-H + 5'-deoxyadenosine + L-methionine + A + S-adenosyl-L-homocysteine + 2 H(+). In terms of biological role, catalyzes the methylthiolation of an aspartic acid residue of ribosomal protein uS12. This chain is Ribosomal protein uS12 methylthiotransferase RimO, found in Treponema denticola (strain ATCC 35405 / DSM 14222 / CIP 103919 / JCM 8153 / KCTC 15104).